A 152-amino-acid polypeptide reads, in one-letter code: Ribosome maturation factor RimP (152 aa).

It belongs to the RimP family.

Its subcellular location is the cytoplasm. In terms of biological role, required for maturation of 30S ribosomal subunits. The sequence is that of Ribosome maturation factor RimP from Aeromonas salmonicida (strain A449).